Consider the following 299-residue polypeptide: ATP phosphoribosyltransferase (299 aa).

This sequence belongs to the ATP phosphoribosyltransferase family. Long subfamily. As to quaternary structure, equilibrium between an active dimeric form, an inactive hexameric form and higher aggregates. Interconversion between the various forms is largely reversible and is influenced by the natural substrates and inhibitors of the enzyme. Requires Mg(2+) as cofactor.

It is found in the cytoplasm. The catalysed reaction is 1-(5-phospho-beta-D-ribosyl)-ATP + diphosphate = 5-phospho-alpha-D-ribose 1-diphosphate + ATP. The protein operates within amino-acid biosynthesis; L-histidine biosynthesis; L-histidine from 5-phospho-alpha-D-ribose 1-diphosphate: step 1/9. Its activity is regulated as follows. Feedback inhibited by histidine. In terms of biological role, catalyzes the condensation of ATP and 5-phosphoribose 1-diphosphate to form N'-(5'-phosphoribosyl)-ATP (PR-ATP). Has a crucial role in the pathway because the rate of histidine biosynthesis seems to be controlled primarily by regulation of HisG enzymatic activity. The polypeptide is ATP phosphoribosyltransferase (Buchnera aphidicola subsp. Diuraphis noxia).